Reading from the N-terminus, the 537-residue chain is Aminopeptidase Y (537 aa).

The N-terminal stretch at 1-21 is a signal peptide; that stretch reads MHFSLKQLAVAAFYATNLGSA. The propeptide occupies 22-56; sequence YVIPQFFQEAFQQEEPIENYLPQLNDDDSSAVAAN. N-linked (GlcNAc...) asparagine glycosylation is found at asparagine 85, asparagine 96, asparagine 115, asparagine 150, and asparagine 162. Zn(2+) is bound by residues histidine 314 and aspartate 326. Catalysis depends on glutamate 358, which acts as the Proton acceptor. Glutamate 359 provides a ligand contact to Zn(2+). Residue asparagine 371 is glycosylated (N-linked (GlcNAc...) asparagine). Zn(2+) is bound at residue aspartate 387. Asparagine 427 is a glycosylation site (N-linked (GlcNAc...) asparagine). Histidine 472 is a binding site for Zn(2+). Residue asparagine 480 is glycosylated (N-linked (GlcNAc...) asparagine).

This sequence belongs to the peptidase M28 family. M28A subfamily. As to quaternary structure, monomer. Requires Zn(2+) as cofactor.

The protein resides in the vacuole. The catalysed reaction is Preferentially, release of N-terminal lysine.. The polypeptide is Aminopeptidase Y (APE3) (Saccharomyces cerevisiae (strain ATCC 204508 / S288c) (Baker's yeast)).